The chain runs to 358 residues: Microbial Terpene synthase-like protein 13 (358 aa).

It belongs to the terpene synthase family.

No terpene synthase activity detected in vitro. The polypeptide is Microbial Terpene synthase-like protein 13 (Selaginella moellendorffii (Spikemoss)).